Here is a 127-residue protein sequence, read N- to C-terminus: Thioredoxin-3, mitochondrial (127 aa).

Residues 1-21 (MLFYKPVMRMAVRPLKSIRFQ) constitute a mitochondrion transit peptide. One can recognise a Thioredoxin domain in the interval 22–127 (SSYTSITKLT…TALEKGIKDL (106 aa)). Catalysis depends on nucleophile residues cysteine 55 and cysteine 58. A disulfide bridge links cysteine 55 with cysteine 58.

It belongs to the thioredoxin family.

It is found in the mitochondrion. In Saccharomyces cerevisiae (strain ATCC 204508 / S288c) (Baker's yeast), this protein is Thioredoxin-3, mitochondrial (TRX3).